A 426-amino-acid chain; its full sequence is Glutamyl-tRNA reductase (426 aa).

Residues 49 to 52 (TCNR), Ser-110, 115 to 117 (EAQ), and Gln-121 each bind substrate. Cys-50 functions as the Nucleophile in the catalytic mechanism. 191–196 (GAGEMA) serves as a coordination point for NADP(+).

This sequence belongs to the glutamyl-tRNA reductase family. As to quaternary structure, homodimer.

The enzyme catalyses (S)-4-amino-5-oxopentanoate + tRNA(Glu) + NADP(+) = L-glutamyl-tRNA(Glu) + NADPH + H(+). Its pathway is porphyrin-containing compound metabolism; protoporphyrin-IX biosynthesis; 5-aminolevulinate from L-glutamyl-tRNA(Glu): step 1/2. Functionally, catalyzes the NADPH-dependent reduction of glutamyl-tRNA(Glu) to glutamate 1-semialdehyde (GSA). In Rhodopirellula baltica (strain DSM 10527 / NCIMB 13988 / SH1), this protein is Glutamyl-tRNA reductase.